Reading from the N-terminus, the 293-residue chain is D-alanine--D-alanine ligase (293 aa).

An ATP-grasp domain is found at 98 to 291 (KIIWEQHSLT…FNKLVTSIIN (194 aa)). 124–177 (NFPLPWAVKPTLEGSSIGISKVDNQMQLNDALMLAWQYAPYALIEQWIKGDEYT) is an ATP binding site. The Mg(2+) site is built by aspartate 245, glutamate 258, and asparagine 260.

The protein belongs to the D-alanine--D-alanine ligase family. Mg(2+) is required as a cofactor. Mn(2+) serves as cofactor.

It is found in the cytoplasm. The enzyme catalyses 2 D-alanine + ATP = D-alanyl-D-alanine + ADP + phosphate + H(+). Its pathway is cell wall biogenesis; peptidoglycan biosynthesis. In terms of biological role, cell wall formation. The protein is D-alanine--D-alanine ligase of Vesicomyosocius okutanii subsp. Calyptogena okutanii (strain HA).